Reading from the N-terminus, the 756-residue chain is Polyribonucleotide nucleotidyltransferase (756 aa).

2 residues coordinate Mg(2+): Asp527 and Asp533. Positions 593-652 (PRITTIKVPVDKIGEVIGPKGKMINSITEETGASISIEDDGTVFVGASNGEAAQAAIDKI) constitute a KH domain. One can recognise an S1 motif domain in the interval 664-733 (GERFLGTVVK…NRGKISLVLV (70 aa)).

Belongs to the polyribonucleotide nucleotidyltransferase family. Mg(2+) is required as a cofactor.

The protein resides in the cytoplasm. It carries out the reaction RNA(n+1) + phosphate = RNA(n) + a ribonucleoside 5'-diphosphate. In terms of biological role, involved in mRNA degradation. Catalyzes the phosphorolysis of single-stranded polyribonucleotides processively in the 3'- to 5'-direction. The chain is Polyribonucleotide nucleotidyltransferase from Mycolicibacterium gilvum (strain PYR-GCK) (Mycobacterium gilvum (strain PYR-GCK)).